The following is a 212-amino-acid chain: Elongation factor Ts (212 aa).

The interval 82 to 85 is involved in Mg(2+) ion dislocation from EF-Tu; sequence SDFV.

It belongs to the EF-Ts family.

It localises to the cytoplasm. Associates with the EF-Tu.GDP complex and induces the exchange of GDP to GTP. It remains bound to the aminoacyl-tRNA.EF-Tu.GTP complex up to the GTP hydrolysis stage on the ribosome. The sequence is that of Elongation factor Ts from Solibacter usitatus (strain Ellin6076).